The primary structure comprises 239 residues: Small ribosomal subunit protein uS3 (239 aa).

A KH type-2 domain is found at 38 to 106 (IRELIEERFK…KTFVNVVEIK (69 aa)).

Belongs to the universal ribosomal protein uS3 family. In terms of assembly, part of the 30S ribosomal subunit. Forms a tight complex with proteins S10 and S14.

In terms of biological role, binds the lower part of the 30S subunit head. Binds mRNA in the 70S ribosome, positioning it for translation. This Elusimicrobium minutum (strain Pei191) protein is Small ribosomal subunit protein uS3.